The following is a 147-amino-acid chain: Large ribosomal subunit protein uL13 (147 aa).

The protein belongs to the universal ribosomal protein uL13 family. As to quaternary structure, part of the 50S ribosomal subunit.

This protein is one of the early assembly proteins of the 50S ribosomal subunit, although it is not seen to bind rRNA by itself. It is important during the early stages of 50S assembly. The sequence is that of Large ribosomal subunit protein uL13 from Limosilactobacillus fermentum (strain NBRC 3956 / LMG 18251) (Lactobacillus fermentum).